Here is a 253-residue protein sequence, read N- to C-terminus: Putative enoyl-CoA hydratase (253 aa).

The active site involves glutamate 131.

This sequence belongs to the enoyl-CoA hydratase/isomerase family. Homohexamer; dimer of trimers.

It catalyses the reaction a (3S)-3-hydroxyacyl-CoA = a (2E)-enoyl-CoA + H2O. The protein is Putative enoyl-CoA hydratase of Thermus thermophilus (strain ATCC 27634 / DSM 579 / HB8).